The following is a 413-amino-acid chain: Gamma-glutamyl phosphate reductase (413 aa).

It belongs to the gamma-glutamyl phosphate reductase family.

The protein resides in the cytoplasm. The catalysed reaction is L-glutamate 5-semialdehyde + phosphate + NADP(+) = L-glutamyl 5-phosphate + NADPH + H(+). It participates in amino-acid biosynthesis; L-proline biosynthesis; L-glutamate 5-semialdehyde from L-glutamate: step 2/2. Catalyzes the NADPH-dependent reduction of L-glutamate 5-phosphate into L-glutamate 5-semialdehyde and phosphate. The product spontaneously undergoes cyclization to form 1-pyrroline-5-carboxylate. This Thermus thermophilus (strain ATCC 27634 / DSM 579 / HB8) protein is Gamma-glutamyl phosphate reductase.